The following is an 859-amino-acid chain: Photoactivated adenylate cyclase subunit beta-like protein FB (859 aa).

One can recognise a BLUF 1 domain in the interval 56-149; it reads LRRLMYLSKS…GRMYGDWHMK (94 aa). The 129-residue stretch at 205–333 folds into the Guanylate cyclase 1 domain; the sequence is VVTFIYLVEF…DCINTTSRIA (129 aa). The disordered stretch occupies residues 414-449; the sequence is GLPNSQRPPIFDDTPKANRRPRTPGYGGRQRSDSQV. The BLUF 2 domain maps to 471-563; that stretch reads LTTLTYISQA…RVYPSEWTLT (93 aa). In terms of domain architecture, Guanylate cyclase 2 spans 619–748; it reads VMLATDICSF…AVSARVMEVE (130 aa). The disordered stretch occupies residues 813-859; that stretch reads AARSGEKPLTEPEAAKPDFRVSPGRVRHGDSGRRSNSAQGKRSIQVR. Over residues 815–831 the composition is skewed to basic and acidic residues; that stretch reads RSGEKPLTEPEAAKPDF. Residues 846–859 show a composition bias toward polar residues; that stretch reads RSNSAQGKRSIQVR.

The protein belongs to the adenylyl cyclase class-4/guanylyl cyclase family. In terms of assembly, heterotetramer of two alpha and two beta subunits.

The protein resides in the cell projection. It is found in the cilium. Its subcellular location is the flagellum. The protein is Photoactivated adenylate cyclase subunit beta-like protein FB of Euglena gracilis.